We begin with the raw amino-acid sequence, 269 residues long: Bis(5'-nucleosyl)-tetraphosphatase, symmetrical (269 aa).

The protein belongs to the Ap4A hydrolase family.

It catalyses the reaction P(1),P(4)-bis(5'-adenosyl) tetraphosphate + H2O = 2 ADP + 2 H(+). Functionally, hydrolyzes diadenosine 5',5'''-P1,P4-tetraphosphate to yield ADP. The sequence is that of Bis(5'-nucleosyl)-tetraphosphatase, symmetrical from Vibrio cholerae serotype O1 (strain ATCC 39541 / Classical Ogawa 395 / O395).